A 554-amino-acid chain; its full sequence is Glutamine--tRNA ligase (554 aa).

A 'HIGH' region motif is present at residues 34 to 44; that stretch reads PEPNGYLHIGH. ATP-binding positions include 35 to 37 and 41 to 47; these read EPN and HIGHAKS. L-glutamine contacts are provided by Asp67 and Tyr212. ATP contacts are provided by residues Thr231, 261 to 262, and 269 to 271; these read RL and MSK. The 'KMSKS' region motif lies at 268 to 272; that stretch reads VMSKR. The tract at residues 317–324 is interaction with tRNA; that stretch reads TKQDNTIE.

It belongs to the class-I aminoacyl-tRNA synthetase family. Monomer.

It is found in the cytoplasm. It carries out the reaction tRNA(Gln) + L-glutamine + ATP = L-glutaminyl-tRNA(Gln) + AMP + diphosphate. This Escherichia coli O7:K1 (strain IAI39 / ExPEC) protein is Glutamine--tRNA ligase.